A 496-amino-acid polypeptide reads, in one-letter code: Genome polyprotein (496 aa).

Residues 1–447 are Extracellular-facing; the sequence is SRCTHLENRD…HTVLGGAFNS (447 aa). 6 disulfide bridges follow: C3/C30, C60/C116, C60/C121, C74/C105, C92/C116, and C92/C121. The tract at residues 98 to 111 is fusion peptide; sequence DRGWGNHCGLFGKG. N154 carries an N-linked (GlcNAc...) asparagine; by host glycan. 2 cysteine pairs are disulfide-bonded: C186–C290 and C307–C338. The helical transmembrane segment at 448–468 threads the bilayer; sequence IFGGVGFLPKLLMGVALAWLG. At 469-479 the chain is on the cytoplasmic side; that stretch reads LNTRNPTMSMS. A helical transmembrane segment spans residues 480–496; sequence FLLAGGLVLAMTLGVGA.

Homodimer; in the endoplasmic reticulum and Golgi. Post-translationally, N-glycosylated.

The protein resides in the virion membrane. It localises to the host endoplasmic reticulum membrane. Binds to host cell surface receptor and mediates fusion between viral and cellular membranes. Envelope protein is synthesized in the endoplasmic reticulum in the form of heterodimer with protein prM. They play a role in virion budding in the ER, and the newly formed immature particle is covered with 60 spikes composed of heterodimer between precursor prM and envelope protein E. The virion is transported to the Golgi apparatus where the low pH causes dissociation of PrM-E heterodimers and formation of E homodimers. prM-E cleavage is ineficient, and many virions are only partially matured. These uncleaved prM would play a role in immune evasion. The polypeptide is Genome polyprotein (Bos taurus (Bovine)).